Consider the following 181-residue polypeptide: SecB-like chaperone Rv1957 (181 aa).

Thr2 carries the post-translational modification N-acetylthreonine.

Belongs to the SecB-like family. In terms of assembly, homotetramer, interacts with antitoxin HigA1.

Functionally, chaperone component of an atypical, type II toxin-antitoxin chaperone (TAC) system. Prevents antitoxin HigA1 aggregation in vitro at a 1:3 chaperone:antitoxin ratio, probably also protects antitoxin HigA1 from protease. Required for neutralization of toxin HigB1 upon ectopic expression in Mycobacterium marinum or E.coli. When expressed in E.coli complements a secB deletion, restores export of OmpA and MBP and inhibits aggregation of proOmpC although it is less efficient than endogenous SecB. Complements the general chaperone function of E.coli SecB less well. The protein is SecB-like chaperone Rv1957 (secBL) of Mycobacterium tuberculosis (strain ATCC 25618 / H37Rv).